The following is a 311-amino-acid chain: NAD kinase (311 aa).

Asp88 serves as the catalytic Proton acceptor. NAD(+) contacts are provided by residues 88–89, 162–163, Arg190, Asp192, Val200, and 203–208; these read DG, NE, and TAHNLS.

The protein belongs to the NAD kinase family. Requires a divalent metal cation as cofactor.

Its subcellular location is the cytoplasm. The enzyme catalyses NAD(+) + ATP = ADP + NADP(+) + H(+). Involved in the regulation of the intracellular balance of NAD and NADP, and is a key enzyme in the biosynthesis of NADP. Catalyzes specifically the phosphorylation on 2'-hydroxyl of the adenosine moiety of NAD to yield NADP. This is NAD kinase from Rhodopirellula baltica (strain DSM 10527 / NCIMB 13988 / SH1).